The sequence spans 131 residues: Small ribosomal subunit protein uS12 (131 aa).

A disordered region spans residues 1-22; it reads MPTTQQLLRKGRKVLQKKSKVP. The span at 9-20 shows a compositional bias: basic residues; it reads RKGRKVLQKKSK. Asp89 carries the post-translational modification 3-methylthioaspartic acid. The interval 102-131 is disordered; sequence LDTQGVKDRNKSRSKYGTKKPKAGAAAAKK. Over residues 113–131 the composition is skewed to basic residues; that stretch reads SRSKYGTKKPKAGAAAAKK.

This sequence belongs to the universal ribosomal protein uS12 family. Part of the 30S ribosomal subunit. Contacts proteins S8 and S17. May interact with IF1 in the 30S initiation complex.

Functionally, with S4 and S5 plays an important role in translational accuracy. In terms of biological role, interacts with and stabilizes bases of the 16S rRNA that are involved in tRNA selection in the A site and with the mRNA backbone. Located at the interface of the 30S and 50S subunits, it traverses the body of the 30S subunit contacting proteins on the other side and probably holding the rRNA structure together. The combined cluster of proteins S8, S12 and S17 appears to hold together the shoulder and platform of the 30S subunit. This chain is Small ribosomal subunit protein uS12, found in Deinococcus radiodurans (strain ATCC 13939 / DSM 20539 / JCM 16871 / CCUG 27074 / LMG 4051 / NBRC 15346 / NCIMB 9279 / VKM B-1422 / R1).